The primary structure comprises 127 residues: C-C motif chemokine 28 (127 aa).

A signal peptide spans 1-19 (MQQRGLAIVALAVCAALHA). 2 disulfide bridges follow: Cys30/Cys58 and Cys31/Cys73. Asn78 carries N-linked (GlcNAc...) asparagine glycosylation. Residues 92–115 (KNGKGNVCHRKKHHGKRNSNRAHQ) are compositionally biased toward basic residues. The disordered stretch occupies residues 92–127 (KNGKGNVCHRKKHHGKRNSNRAHQGKHETYGHKTPY). A compositionally biased stretch (basic and acidic residues) spans 116 to 127 (GKHETYGHKTPY).

This sequence belongs to the intercrine beta (chemokine CC) family. Preferentially expressed by epithelial cells of diverse tissues including normal and pathological colon, salivary gland, mammary gland, trachea and rectum. Also found in prostate, spleen, thyroid, psoriasis skin and in lower levels in peripheral blood leukocytes, small intestine, Peyer patches, stomach and normal skin.

Its subcellular location is the secreted. Chemotactic activity for resting CD4, CD8 T-cells and eosinophils. Binds to CCR3 and CCR10 and induces calcium mobilization in a dose-dependent manner. The sequence is that of C-C motif chemokine 28 (CCL28) from Homo sapiens (Human).